The chain runs to 638 residues: Epithelial sodium channel subunit delta (638 aa).

Positions 1-13 (MAEHRSMDGRMEA) are enriched in basic and acidic residues. The tract at residues 1 to 47 (MAEHRSMDGRMEAATRGGSHLQAAAQTPPRPGPPSAPPPPPKEGHQE) is disordered. The Cytoplasmic portion of the chain corresponds to 1–86 (MAEHRSMDGR…CSRGNRLKTT (86 aa)). A compositionally biased stretch (pro residues) spans 28–41 (PPRPGPPSAPPPPP). Residues 87 to 107 (SWGLLSLGALVALCWQLGLLF) form a helical membrane-spanning segment. Residues 108–530 (ERHWHRPVLM…VPQLLSAMGS (423 aa)) lie on the Extracellular side of the membrane. N-linked (GlcNAc...) asparagine glycans are attached at residues Asn-166 and Asn-384. The chain crosses the membrane as a helical span at residues 531–551 (LCSLWFGASVLSLLELLELLL). Over 552–638 (DASALTLVLG…GPQPLETLDT (87 aa)) the chain is Cytoplasmic. Residues 574–613 (RASPASGASSIKPEASQMPTPAGGTSDDPEPSGPHLPRVM) are disordered.

This sequence belongs to the amiloride-sensitive sodium channel (TC 1.A.6) family. SCNN1D subfamily. As to quaternary structure, can form an alternative heterotrimeric epithelial sodium channel (ENaC), composed of a delta (SCNN1D), beta (SCNN1B), and gamma (SCNN1G) subunit, where the delta (SCNN1D) subunit replaces the alpha (SCNN1A) subunit.

It is found in the apical cell membrane. The enzyme catalyses Na(+)(in) = Na(+)(out). With respect to regulation, originally identified and characterized by its inhibition by the diuretic drug amiloride. Its function is as follows. Potential alternative pore-forming subunit of the epithelial sodium channel (ENaC), capable of replacing the alpha/SCNN1A subunit, creating a more active channel with distinct properties. ENaC functions in epithelial tissues, where it facilitates the electrodiffusion of sodium ions from the extracellular fluid through the apical membrane of cells, with water following osmotically, regulating sodium balance and fluid homeostasis. This subunit could also function independently as a sodium channel or assemble into other tissue-specific heterotrimeric sodium channels. The chain is Epithelial sodium channel subunit delta from Pan troglodytes (Chimpanzee).